Here is a 288-residue protein sequence, read N- to C-terminus: 4-diphosphocytidyl-2-C-methyl-D-erythritol kinase (288 aa).

Lys-8 is a catalytic residue. 90 to 100 is an ATP binding site; that stretch reads PVGAGLAGGSS. Residue Asp-132 is part of the active site.

It belongs to the GHMP kinase family. IspE subfamily.

It carries out the reaction 4-CDP-2-C-methyl-D-erythritol + ATP = 4-CDP-2-C-methyl-D-erythritol 2-phosphate + ADP + H(+). Its pathway is isoprenoid biosynthesis; isopentenyl diphosphate biosynthesis via DXP pathway; isopentenyl diphosphate from 1-deoxy-D-xylulose 5-phosphate: step 3/6. Functionally, catalyzes the phosphorylation of the position 2 hydroxy group of 4-diphosphocytidyl-2C-methyl-D-erythritol. The chain is 4-diphosphocytidyl-2-C-methyl-D-erythritol kinase from Chlamydia trachomatis serovar A (strain ATCC VR-571B / DSM 19440 / HAR-13).